Reading from the N-terminus, the 340-residue chain is MWKFLKEMPKVELHAHLNGSLNTNSLQDLAEKVYGNTSEEFSHLCARFVNFEKDSNLDKCFEKFAFVHELTSTAAGLQYATELVIRDFANDNIQYLELRTTPKANKNYLRRDYLRIVLDTIKRSRKKYPNILVKLLPSINRSEPVAVAEETVALALEFAKTDPDLVVGIDLSGIPTKGKFTDFCGALDLARREGLKLVIHCAEIDNPPEIKEMLSFGMSRCGHGTYLTEEDFAQMKAANIPIECCLTSNIKSGSVSSFEEHHLKRLMESDAPRVVCTDDSGVFDTSLTNEFLLVVETFNVTRDQCIDLTLEAVKHSFASEQERQQMALKVEHYVNSLQTD.

Zn(2+)-binding residues include His14 and His16. N(6)-methyl-AMP-binding positions include His16, Asn18, His68, 100-103, and Gly173; that span reads TTPK. Zn(2+) is bound at residue His200. Glu203, Asp278, and Asp279 together coordinate N(6)-methyl-AMP. The active-site Proton donor is the Glu203. Position 278 (Asp278) interacts with Zn(2+).

The protein belongs to the metallo-dependent hydrolases superfamily. Adenosine and AMP deaminases family. Monomer. Zn(2+) serves as cofactor.

It catalyses the reaction N(6)-methyl-AMP + H2O + H(+) = IMP + methylamine. In terms of biological role, catalyzes the hydrolysis of the free cytosolic methylated adenosine nucleotide N(6)-methyl-AMP (N6-mAMP) to produce inositol monophosphate (IMP) and methylamine. Is required for the catabolism of cytosolic N6-mAMP, which is derived from the degradation of mRNA containing N6-methylated adenine (m6A). The protein is Adenosine deaminase-like protein of Drosophila pseudoobscura pseudoobscura (Fruit fly).